Consider the following 132-residue polypeptide: Histone H2A (132 aa).

Residues 1 to 13 (MSAKGKTGRKKAS) are compositionally biased toward basic residues. Residues 1 to 21 (MSAKGKTGRKKASKGTSNSAK) form a disordered region.

It belongs to the histone H2A family. In terms of assembly, the nucleosome is a histone octamer containing two molecules each of H2A, H2B, H3 and H4 assembled in one H3-H4 heterotetramer and two H2A-H2B heterodimers. The octamer wraps approximately 147 bp of DNA.

It is found in the nucleus. Its subcellular location is the chromosome. In terms of biological role, core component of nucleosome. Nucleosomes wrap and compact DNA into chromatin, limiting DNA accessibility to the cellular machineries which require DNA as a template. Histones thereby play a central role in transcription regulation, DNA repair, DNA replication and chromosomal stability. DNA accessibility is regulated via a complex set of post-translational modifications of histones, also called histone code, and nucleosome remodeling. The sequence is that of Histone H2A from Plasmodium falciparum.